The following is a 142-amino-acid chain: Ribosome-binding factor A (142 aa).

The segment at 123-142 is disordered; sequence VQRDLDSAPEDDEPETGTGH. Residues 129–142 show a composition bias toward acidic residues; it reads SAPEDDEPETGTGH.

Belongs to the RbfA family. Monomer. Binds 30S ribosomal subunits, but not 50S ribosomal subunits or 70S ribosomes.

It localises to the cytoplasm. One of several proteins that assist in the late maturation steps of the functional core of the 30S ribosomal subunit. Associates with free 30S ribosomal subunits (but not with 30S subunits that are part of 70S ribosomes or polysomes). Required for efficient processing of 16S rRNA. May interact with the 5'-terminal helix region of 16S rRNA. The sequence is that of Ribosome-binding factor A from Methylobacterium radiotolerans (strain ATCC 27329 / DSM 1819 / JCM 2831 / NBRC 15690 / NCIMB 10815 / 0-1).